A 184-amino-acid chain; its full sequence is Ethylene-responsive transcription factor ERF122 (184 aa).

A DNA-binding region (AP2/ERF) is located at residues 120–177 (KYKGVRKKPSGKWAAEIWDPRSKSRRWLGTFLTAEMAAQSYNDAAAEYRARRGKTNGE).

Belongs to the AP2/ERF transcription factor family. ERF subfamily.

It localises to the nucleus. In terms of biological role, probably acts as a transcriptional activator. Binds to the GCC-box pathogenesis-related promoter element. May be involved in the regulation of gene expression by stress factors and by components of stress signal transduction pathways. The sequence is that of Ethylene-responsive transcription factor ERF122 (ERF122) from Arabidopsis thaliana (Mouse-ear cress).